Consider the following 422-residue polypeptide: Dihydrolipoyllysine-residue succinyltransferase component of 2-oxoglutarate dehydrogenase complex (422 aa).

Positions 1–76 constitute a Lipoyl-binding domain; the sequence is MPEVKVPELA…EVGQAIAVIG (76 aa). An N6-lipoyllysine modification is found at K42. The tract at residues 77-184 is disordered; it reads EGSGNASKEN…APAKEEKKYN (108 aa). Polar residues-rich tracts occupy residues 80-94 and 114-130; these read GNAS…TPQQ and EVNQ…NATP. Residues 127 to 163 form the Peripheral subunit-binding (PSBD) domain; it reads NATPSARRYARENGVNLAEVSPKTNDVVRKEDIDKKQ. The span at 152-163 shows a compositional bias: basic and acidic residues; it reads DVVRKEDIDKKQ. Residues 164–176 show a composition bias toward low complexity; that stretch reads QAPASTQTTQQAP. Catalysis depends on residues H393 and D397.

This sequence belongs to the 2-oxoacid dehydrogenase family. As to quaternary structure, forms a 24-polypeptide structural core with octahedral symmetry. Part of the 2-oxoglutarate dehydrogenase (OGDH) complex composed of E1 (2-oxoglutarate dehydrogenase), E2 (dihydrolipoamide succinyltransferase) and E3 (dihydrolipoamide dehydrogenase); the complex contains multiple copies of the three enzymatic components (E1, E2 and E3). It depends on (R)-lipoate as a cofactor.

The catalysed reaction is N(6)-[(R)-dihydrolipoyl]-L-lysyl-[protein] + succinyl-CoA = N(6)-[(R)-S(8)-succinyldihydrolipoyl]-L-lysyl-[protein] + CoA. It functions in the pathway amino-acid degradation; L-lysine degradation via saccharopine pathway; glutaryl-CoA from L-lysine: step 6/6. E2 component of the 2-oxoglutarate dehydrogenase (OGDH) complex which catalyzes the second step in the conversion of 2-oxoglutarate to succinyl-CoA and CO(2). The chain is Dihydrolipoyllysine-residue succinyltransferase component of 2-oxoglutarate dehydrogenase complex (odhB) from Staphylococcus aureus (strain bovine RF122 / ET3-1).